The following is a 204-amino-acid chain: Glycerol-3-phosphate acyltransferase (204 aa).

The next 4 membrane-spanning stretches (helical) occupy residues 8–28 (NAQF…LLLA), 76–96 (GVLV…LWGI), 122–142 (MGVM…VWAL), and 166–186 (FILH…VLLY).

It belongs to the PlsY family. In terms of assembly, probably interacts with PlsX.

The protein localises to the cell inner membrane. It catalyses the reaction an acyl phosphate + sn-glycerol 3-phosphate = a 1-acyl-sn-glycero-3-phosphate + phosphate. Its pathway is lipid metabolism; phospholipid metabolism. Catalyzes the transfer of an acyl group from acyl-phosphate (acyl-PO(4)) to glycerol-3-phosphate (G3P) to form lysophosphatidic acid (LPA). This enzyme utilizes acyl-phosphate as fatty acyl donor, but not acyl-CoA or acyl-ACP. In Sulfurimonas denitrificans (strain ATCC 33889 / DSM 1251) (Thiomicrospira denitrificans (strain ATCC 33889 / DSM 1251)), this protein is Glycerol-3-phosphate acyltransferase.